Reading from the N-terminus, the 381-residue chain is 2-(3-amino-3-carboxypropyl)histidine synthase subunit 1 (381 aa).

[4Fe-4S] cluster contacts are provided by cysteine 106, cysteine 209, and cysteine 344.

This sequence belongs to the DPH1/DPH2 family. DPH1 subfamily. As to quaternary structure, component of the 2-(3-amino-3-carboxypropyl)histidine synthase complex composed of dph1, dph2, dph3 and a NADH-dependent reductase. It depends on [4Fe-4S] cluster as a cofactor.

It is found in the nucleus. The protein localises to the cytoplasm. It carries out the reaction L-histidyl-[translation elongation factor 2] + S-adenosyl-L-methionine = 2-[(3S)-amino-3-carboxypropyl]-L-histidyl-[translation elongation factor 2] + S-methyl-5'-thioadenosine + H(+). It participates in protein modification; peptidyl-diphthamide biosynthesis. Functionally, catalyzes the first step of diphthamide biosynthesis, a post-translational modification of histidine which occurs in elongation factor 2. Dph1 and dph2 transfer a 3-amino-3-carboxypropyl (ACP) group from S-adenosyl-L-methionine (SAM) to a histidine residue, the reaction is assisted by a reduction system comprising dph3 and a NADH-dependent reductase. This is 2-(3-amino-3-carboxypropyl)histidine synthase subunit 1 (dph1) from Danio rerio (Zebrafish).